The primary structure comprises 271 residues: GATA transcription factor 19 (271 aa).

Residues 1 to 23 are disordered; the sequence is MAAEPPADGRDPPADDGAAGDGA. The Tify domain maps to 33-68; the sequence is LSAASEQLTLVYQGEVYVFDPVPPQKVQAVLLVLGG. A CCT domain is found at 95–137; that stretch reads RVASLMRFREKRKERCFDKKIRYSVRKEVAQKMKRRKGQFAGR. The segment at 166-193 adopts a GATA-type zinc-finger fold; it reads CQNCGISSRLTPAMRRGPAGPRSLCNAC. The segment at 238-271 is disordered; the sequence is NQTTMKTDTEMVPEQEQKADVLPPTKEEDSMATS. Basic and acidic residues predominate over residues 252-271; it reads QEQKADVLPPTKEEDSMATS.

The protein belongs to the type IV zinc-finger family. Class C subfamily.

The protein localises to the nucleus. Its function is as follows. Transcriptional activator that specifically binds 5'-GATA-3' or 5'-GAT-3' motifs within gene promoters. The sequence is that of GATA transcription factor 19 from Oryza sativa subsp. japonica (Rice).